Reading from the N-terminus, the 879-residue chain is MSTERYNAREVEPRWQQIWDEKGVFASRNDDSRPKYYVLEMFPYPSGRIHMGHVRNYTMGDVVARYRRAKGHNVLHPMGWDAFGMPAENAAMQNKTHPAKWTYANIAAMKKQLKSMGLSLDWAREIATCDPSYYKHQQRMFLDFLKAGLVERKQSKVNWDPVDQTVLANEQVIDGRGWRSGALVEQRELTQWFFKISDYSEELLTALDTLDRWPEKVRLMQKNWIGRSEGLLVRFALDAATAPAGESEVEVFTTRPDTLFGAKFVALSPDHPLAAEVAKANPKLEAFIAECHRHGTAQAEIDTAEKLGFDTGLRARHPFDPDWLLPVYVANFVLMDYGTGAIFGCPAHDQRDLDFVNKYGLGNTPVVCPEGQDPKSFVITDTAYDGDGRMINSRFLDGMTIADAKEDVAKRLETATLPRANGGGNAPVAKRQVNYRLRDWGISRQRYWGCPIPIIHCESCGIVPVPVKDLPVKLPDDIEFDRPGNPLDRHPTWKHVACPQCGGKARRETDTMDTFVDSSWYFARFTDPWNENAPTTRKVVDAMMPVDQYIGGIEHAILHLLYSRFFTRAMKATGHVGFDEPFAGLFTQGMVVHETYKNADGSWAAPSEIKIEGTGDARHATLIDTGAPVEIGSIEKMSKSKRNTIDPDDIIGTYGADTARWFMLSDSPPDRDVIWSEEGVQGANRFVQRVWRLVNLAAPHLPKDSAAAGTSADTKPLRSTAHRTLADVSQAIERLRFNTAIAKLYAFVGPLNEAIDDPRLKADPAWAASVREALDMLVRMIAPMMPHLAEQCWEALGGQGLVSEAAWPEVDPVLLVEDTITLPVQINGKKRADVTVGRNAPNPEIEAAVLALDAVKTALAGATPRKIIVVPQRIVNVVV.

Positions 43-53 (PYPSGRIHMGH) match the 'HIGH' region motif. Residues 636–640 (KMSKS) carry the 'KMSKS' region motif. K639 is an ATP binding site.

It belongs to the class-I aminoacyl-tRNA synthetase family.

The protein resides in the cytoplasm. It carries out the reaction tRNA(Leu) + L-leucine + ATP = L-leucyl-tRNA(Leu) + AMP + diphosphate. This chain is Leucine--tRNA ligase, found in Afipia carboxidovorans (strain ATCC 49405 / DSM 1227 / KCTC 32145 / OM5) (Oligotropha carboxidovorans).